An 840-amino-acid polypeptide reads, in one-letter code: Homeobox-leucine zipper protein HOX9 (840 aa).

Disordered stretches follow at residues 1 to 26 (MAAAVAMRSGSGSDGGGGGYDKAGMD) and 135 to 160 (NPSLGNDTSCESNVTTPQNPLRDASN). Over residues 12–21 (GSDGGGGGYD) the composition is skewed to gly residues. Residues 26 to 89 (DSGKYVRYTP…NRRCRDKQRK (64 aa)) constitute a DNA-binding region (homeobox). Positions 86 to 135 (KQRKEASRLQAVNRKLTAMNKLLMEENERLQKQVSQLVHENAYMKQQLQN) form a coiled coil. The region spanning 157-385 (DASNPSGLLT…IAQETSGEVV (229 aa)) is the START domain.

Belongs to the HD-ZIP homeobox family. Class III subfamily. Expressed in seedlings, roots, stems, leaf sheaths and blades and panicles.

The protein localises to the nucleus. Probable transcription factor. The sequence is that of Homeobox-leucine zipper protein HOX9 (HOX9) from Oryza sativa subsp. indica (Rice).